The chain runs to 372 residues: GDP-mannose 4,6 dehydratase (372 aa).

The tract at residues 1–20 (MAHAPARCPSARGSGDGEMG) is disordered. Residue Ala2 is modified to N-acetylalanine. NADP(+) contacts are provided by residues 30–35 (GITGQD), 55–58 (RRSS), 86–87 (DL), 108–112 (LGAQS), and Tyr123. Residue Thr155 is part of the active site. Catalysis depends on nucleophile residues Glu157 and Tyr179. Lys183, His209, and Arg214 together coordinate NADP(+). Tyr323 carries the post-translational modification Phosphotyrosine.

It belongs to the NAD(P)-dependent epimerase/dehydratase family. GDP-mannose 4,6-dehydratase subfamily. Requires NADP(+) as cofactor. In terms of tissue distribution, highly expressed in pancreas and small intestine. Expressed in thymus, protstate, colon, heart, placenta, liver and kidney. Expressed at low levels in spleen, testis, brain and lung.

The enzyme catalyses GDP-alpha-D-mannose = GDP-4-dehydro-alpha-D-rhamnose + H2O. The protein operates within nucleotide-sugar biosynthesis; GDP-L-fucose biosynthesis via de novo pathway; GDP-L-fucose from GDP-alpha-D-mannose: step 1/2. Inhibited by GDP-fucose. Its function is as follows. Catalyzes the conversion of GDP-D-mannose to GDP-4-dehydro-6-deoxy-D-mannose. The protein is GDP-mannose 4,6 dehydratase of Homo sapiens (Human).